Here is a 637-residue protein sequence, read N- to C-terminus: 1-deoxy-D-xylulose-5-phosphate synthase (637 aa).

Thiamine diphosphate is bound by residues histidine 74 and 115–117; that span reads GHS. Aspartate 146 lines the Mg(2+) pocket. Residues 147-148, asparagine 175, tyrosine 285, and glutamate 366 each bind thiamine diphosphate; that span reads GA. Asparagine 175 is a binding site for Mg(2+).

The protein belongs to the transketolase family. DXPS subfamily. In terms of assembly, homodimer. It depends on Mg(2+) as a cofactor. Requires thiamine diphosphate as cofactor.

It carries out the reaction D-glyceraldehyde 3-phosphate + pyruvate + H(+) = 1-deoxy-D-xylulose 5-phosphate + CO2. The protein operates within metabolic intermediate biosynthesis; 1-deoxy-D-xylulose 5-phosphate biosynthesis; 1-deoxy-D-xylulose 5-phosphate from D-glyceraldehyde 3-phosphate and pyruvate: step 1/1. Catalyzes the acyloin condensation reaction between C atoms 2 and 3 of pyruvate and glyceraldehyde 3-phosphate to yield 1-deoxy-D-xylulose-5-phosphate (DXP). The sequence is that of 1-deoxy-D-xylulose-5-phosphate synthase from Pelotomaculum thermopropionicum (strain DSM 13744 / JCM 10971 / SI).